We begin with the raw amino-acid sequence, 73 residues long: Small, acid-soluble spore protein C5 (73 aa).

This sequence belongs to the alpha/beta-type SASP family.

In terms of biological role, SASP are bound to spore DNA. They are double-stranded DNA-binding proteins that cause DNA to change to an a-like conformation. They protect the DNA backbone from chemical and enzymatic cleavage and are thus involved in dormant spore's high resistance to UV light. This Priestia megaterium (Bacillus megaterium) protein is Small, acid-soluble spore protein C5 (SASP-C5).